We begin with the raw amino-acid sequence, 33 residues long: Brevinin-2Ea (33 aa).

A disulfide bridge links C27 with C33.

This sequence belongs to the frog skin active peptide (FSAP) family. Brevinin subfamily. As to expression, expressed by the skin glands.

It is found in the secreted. In terms of biological role, shows antibacterial activity against representative Gram-negative and Gram-positive bacterial species, and hemolytic activity. The protein is Brevinin-2Ea of Pelophylax lessonae (Pool frog).